The primary structure comprises 637 residues: Pentatricopeptide repeat-containing protein At1g12300, mitochondrial (637 aa).

Residues 1 to 95 constitute a mitochondrion transit peptide; the sequence is MVKLMIRRLS…PTVIDFSRLF (95 aa). PPR repeat units lie at residues 87 to 121, 122 to 156, 157 to 191, 192 to 226, 227 to 261, 262 to 296, 297 to 331, 332 to 366, 367 to 401, 402 to 436, 437 to 471, 472 to 506, 507 to 541, 542 to 576, and 577 to 611; these read TVID…GIAH, NLYT…GYEP, NTIT…GHKP, DLIT…GCQP, NAVT…NIKL, DAVK…GITT, NIIT…KINP, NVVT…GIAP, DTIT…GCDP, NIRT…GVVA, DTVT…KVPP, NIVT…KMEL, DIGI…GVKP, GVKT…GHAP, and DGWT…GFSV.

It belongs to the PPR family. P subfamily.

It is found in the mitochondrion. This is Pentatricopeptide repeat-containing protein At1g12300, mitochondrial from Arabidopsis thaliana (Mouse-ear cress).